Here is a 414-residue protein sequence, read N- to C-terminus: CinA-like protein (414 aa).

This sequence belongs to the CinA family.

The sequence is that of CinA-like protein from Geobacter sp. (strain M21).